A 178-amino-acid chain; its full sequence is Cytochrome b6-f complex iron-sulfur subunit 2 (178 aa).

The helical transmembrane segment at 17-36 (LLNFFTGAIVATTASAAIYP) threads the bilayer. The Rieske domain maps to 61-161 (GHPIPASQIL…VQVKDDYIWI (101 aa)). [2Fe-2S] cluster is bound by residues Cys107, His109, Cys125, and His128. A disulfide bridge connects residues Cys112 and Cys127.

This sequence belongs to the Rieske iron-sulfur protein family. The 4 large subunits of the cytochrome b6-f complex are cytochrome b6, subunit IV (17 kDa polypeptide, PetD), cytochrome f and the Rieske protein, while the 4 small subunits are PetG, PetL, PetM and PetN. The complex functions as a dimer. The cofactor is [2Fe-2S] cluster.

It is found in the cellular thylakoid membrane. The enzyme catalyses 2 oxidized [plastocyanin] + a plastoquinol + 2 H(+)(in) = 2 reduced [plastocyanin] + a plastoquinone + 4 H(+)(out). In terms of biological role, component of the cytochrome b6-f complex, which mediates electron transfer between photosystem II (PSII) and photosystem I (PSI), cyclic electron flow around PSI, and state transitions. In Nostoc sp. (strain PCC 7120 / SAG 25.82 / UTEX 2576), this protein is Cytochrome b6-f complex iron-sulfur subunit 2.